Reading from the N-terminus, the 241-residue chain is Small ribosomal subunit protein eS4 (241 aa).

Residues 37–99 enclose the S4 RNA-binding domain; it reads IPLGLLLRDY…ADLYLRIVPD (63 aa).

The protein belongs to the eukaryotic ribosomal protein eS4 family.

This is Small ribosomal subunit protein eS4 from Metallosphaera sedula (strain ATCC 51363 / DSM 5348 / JCM 9185 / NBRC 15509 / TH2).